The primary structure comprises 734 residues: Photosystem I P700 chlorophyll a apoprotein A2 (734 aa).

The next 8 membrane-spanning stretches (helical) occupy residues 46–69 (IFAS…FHVA), 135–158 (LYTG…LHLQ), 175–199 (LNHH…HVAI), 273–291 (IAHH…GHMY), 330–353 (LHFQ…QHMY), 369–395 (AALY…IFFI), 417–439 (AIIS…LYIH), and 517–535 (FLVH…LILV). [4Fe-4S] cluster-binding residues include C559 and C568. 2 helical membrane-spanning segments follow: residues 575–596 (AFYL…YWHW) and 643–665 (LSVW…MFLI). Positions 654, 662, and 670 each coordinate chlorophyll a. W671 serves as a coordination point for phylloquinone. A helical membrane pass occupies residues 707 to 727 (FVGLAHFSVGYIFTYAAFLIA).

The protein belongs to the PsaA/PsaB family. In terms of assembly, the PsaA/B heterodimer binds the P700 chlorophyll special pair and subsequent electron acceptors. PSI consists of a core antenna complex that captures photons, and an electron transfer chain that converts photonic excitation into a charge separation. The eukaryotic PSI reaction center is composed of at least 11 subunits. The cofactor is P700 is a chlorophyll a/chlorophyll a' dimer, A0 is one or more chlorophyll a, A1 is one or both phylloquinones and FX is a shared 4Fe-4S iron-sulfur center..

Its subcellular location is the plastid membrane. The enzyme catalyses reduced [plastocyanin] + hnu + oxidized [2Fe-2S]-[ferredoxin] = oxidized [plastocyanin] + reduced [2Fe-2S]-[ferredoxin]. PsaA and PsaB bind P700, the primary electron donor of photosystem I (PSI), as well as the electron acceptors A0, A1 and FX. PSI is a plastocyanin-ferredoxin oxidoreductase, converting photonic excitation into a charge separation, which transfers an electron from the donor P700 chlorophyll pair to the spectroscopically characterized acceptors A0, A1, FX, FA and FB in turn. Oxidized P700 is reduced on the lumenal side of the thylakoid membrane by plastocyanin. The polypeptide is Photosystem I P700 chlorophyll a apoprotein A2 (Cuscuta sandwichiana (Kauna'oa)).